The chain runs to 260 residues: Dehydrogenase/reductase SDR family member 11 (260 aa).

A signal peptide spans 1–30 (MTRAGMERWRDRLALVTGASGGIGAAVARA). NADP(+)-binding positions include 18-23 (GASGGI), 43-44 (RT), E49, 70-71 (DL), and N97. Positions 151 and 166 each coordinate substrate. NADP(+)-binding positions include Y166, K170, 201 to 204 (VETQ), and K208. Y166 acts as the Proton acceptor in catalysis.

It belongs to the short-chain dehydrogenases/reductases (SDR) family. Homotetramer.

It localises to the secreted. The enzyme catalyses a 3beta-hydroxysteroid + NADP(+) = a 3-oxosteroid + NADPH + H(+). It catalyses the reaction 17beta-estradiol + NAD(+) = estrone + NADH + H(+). The catalysed reaction is 17beta-estradiol + NADP(+) = estrone + NADPH + H(+). Its pathway is steroid biosynthesis; estrogen biosynthesis. Its activity is regulated as follows. Inhibited by flavonoids including apigenin, luteolin, genistein, kaempferol and quercetin and also by carbenoxolone, zearalenone, glycyrrhetinic, curcumin and flufenamic acid. Its function is as follows. Catalyzes the conversion of the 17-keto group of estrone, 4- and 5-androstenes and 5-alpha-androstanes into their 17-beta-hydroxyl metabolites and the conversion of the 3-keto group of 3-, 3,17- and 3,20- diketosteroids into their 3-hydroxyl metabolites. Exhibits reductive 3-beta-hydroxysteroid dehydrogenase activity toward 5-beta-androstanes, 5-beta-pregnanes, 4-pregnenes and bile acids. May also reduce endogenous and exogenous alpha-dicarbonyl compounds and xenobiotic alicyclic ketones. The protein is Dehydrogenase/reductase SDR family member 11 (Dhrs11) of Mus musculus (Mouse).